The sequence spans 343 residues: APQAPSVENPPEADCMLGIGKGYRGKKATTVAGVPCQEWAAQEPHRHGIFTPETNPRAGLEKNYCRNPDGDVNGPWCYTTNPRKLFDYCDIPQCESSFDCGKPKVEPKKCPARVVGGCVATPHSWPWQVSLRRRSREHFCGGTLISPEWVLTAAHCLDSILGPSFYTVILGAHYEMAREASVQEIPVSRLFLEPSRADIALLKLSSPAVITDEVIPACLPSPNYVVADKTVCYITGWGETQGTFGVGRLKEARLPVIENKVCNRYEYLNGRVKSTELCAGDLAGGTDSCQGDSGGPLVCFEKDKYILQGVTSWGLGCARPNKPGVYVRVSTYVPWIEETMRRY.

2 consecutive Kringle domains span residues 1–17 (APQAPSVENPPEADCML) and 41–120 (AQEP…GCVA). The segment at 1–140 (APQAPSVENP…LRRRSREHFC (140 aa)) is plasmin heavy chain A. 3 cysteine pairs are disulfide-bonded: cysteine 15/cysteine 94, cysteine 36/cysteine 77, and cysteine 65/cysteine 89. The region spanning 114–341 (VVGGCVATPH…YVPWIEETMR (228 aa)) is the Peptidase S1 domain. Position 130 is a phosphoserine (serine 130). Residues cysteine 140 and cysteine 156 are joined by a disulfide bond. Residues 141-343 (GGTLISPEWV…PWIEETMRRY (203 aa)) are plasmin light chain B. Active-site charge relay system residues include histidine 155 and aspartate 198. A Phosphoserine modification is found at serine 221. 3 cysteine pairs are disulfide-bonded: cysteine 232-cysteine 299, cysteine 262-cysteine 278, and cysteine 289-cysteine 317. The Charge relay system role is filled by serine 293.

It belongs to the peptidase S1 family. Plasminogen subfamily. Interacts with CSPG4 and AMOT. Interacts (via the Kringle domains) with HRG; the interaction tethers PLG to the cell surface and enhances its activation. Interacts (via Kringle 4 domain) with ADA; the interaction stimulates PLG activation when in complex with DPP4. Angiostatin: Interacts with ATP5F1A; the interaction inhibits most of the angiogenic effects of angiostatin.

Its subcellular location is the secreted. The enzyme catalyses Preferential cleavage: Lys-|-Xaa &gt; Arg-|-Xaa, higher selectivity than trypsin. Converts fibrin into soluble products.. Its activity is regulated as follows. Converted into plasmin by plasminogen activators, both plasminogen and its activator being bound to fibrin. Cannot be activated with streptokinase. Functionally, plasmin dissolves the fibrin of blood clots and acts as a proteolytic factor in a variety of other processes including embryonic development, tissue remodeling, tumor invasion, and inflammation. In ovulation, weakens the walls of the Graafian follicle. It activates the urokinase-type plasminogen activator, collagenases and several complement zymogens, such as C1, C4 and C5. Cleavage of fibronectin and laminin leads to cell detachment and apoptosis. Also cleaves fibrin, thrombospondin and von Willebrand factor. Its role in tissue remodeling and tumor invasion may be modulated by CSPG4. Binds to cells. This chain is Plasminogen (PLG), found in Ovis aries (Sheep).